A 408-amino-acid polypeptide reads, in one-letter code: Potassium channel subfamily K member 13 (408 aa).

Residues 1 to 19 lie on the Cytoplasmic side of the membrane; sequence MAGRGFSWGPGHLNEDNAR. The helical transmembrane segment at 20–40 threads the bilayer; it reads FLLLAALIVLYLLGGAAVFSA. Asn-59 and Asn-65 each carry an N-linked (GlcNAc...) asparagine glycan. An intramembrane region (pore-forming) is located at residues 95-115; the sequence is WDFTGAFYFVGTVVSTIGFGM. 3 residues coordinate K(+): Thr-110, Ile-111, and Gly-112. Residues 110-115 are selectivity filter 1; it reads TIGFGM. A helical membrane pass occupies residues 125–145; that stretch reads IFLIFYGLVGCSSTILFFNLF. The Cytoplasmic segment spans residues 146–193; sequence LERLITIIAYIMKSCHQRQLRRRGALPQESLKDAGQCEVDSLAGWKPS. The chain crosses the membrane as a helical span at residues 194-214; the sequence is VYYVMLILCTASILISCCASA. Positions 224–244 form an intramembrane region, pore-forming; it reads YFDSLYFCFVAFSTIGFGDLV. 4 residues coordinate K(+): Thr-237, Ile-238, Gly-239, and Phe-240. The interval 237–242 is selectivity filter 2; it reads TIGFGD. A helical transmembrane segment spans residues 263 to 283; it reads VFILMGVCCIYSLFNVISILI. The Cytoplasmic portion of the chain corresponds to 284-408; it reads KQSLNWILRK…NRLAETSGDR (125 aa).

It belongs to the two pore domain potassium channel (TC 1.A.1.8) family. Homodimer. Heterodimer with KCNK12. As to expression, expressed in microglia (at protein level).

The protein localises to the cell membrane. It carries out the reaction K(+)(in) = K(+)(out). Its activity is regulated as follows. The channel conductance is activated by arachidonic acid and inhibited by Ba(2+) ions, volatile anesthetics such as halothane and antiarrhythmic drugs mexiletine and lidocaine. Insensitive to extracellular pH change. Its function is as follows. K(+) channel that conducts outward rectifying tonic currents potentiated by purinergic signals. Homo- and heterodimerizes to form functional channels with distinct regulatory and gating properties. Contributes most of K(+) currents at the plasma membrane of resting microglia. Maintains a depolarized membrane potential required for proper ramified microglia morphology and phagocytosis, selectively mediating microglial pruning of presynaptic compartments at hippocampal excitatory synapses. Upon local release of ATP caused by neuronal injury or infection, it is potentiated by P2RY12 and P2RX7 receptor signaling and contributes to ATP-triggered K(+) efflux underlying microglial NLRP3 inflammasome assembly and IL1B release. This chain is Potassium channel subfamily K member 13, found in Homo sapiens (Human).